The sequence spans 447 residues: Elongation factor 1-alpha (447 aa).

One can recognise a tr-type G domain in the interval 5-230 (KTHINIVVIG…DQINEPKRPS (226 aa)). The segment at 14-21 (GHVDSGKS) is G1. 14 to 21 (GHVDSGKS) lines the GTP pocket. The residue at position 55 (K55) is an N6,N6-dimethyllysine. The interval 70 to 74 (GITID) is G2. K79 carries the post-translational modification N6,N6,N6-trimethyllysine. Residues 91-94 (DAPG) are G3. GTP contacts are provided by residues 91-95 (DAPGH) and 153-156 (NKMD). Positions 153–156 (NKMD) are G4. K187 carries the N6,N6,N6-trimethyllysine modification. The interval 194–196 (SGF) is G5. K261 is subject to N6-methyllysine. A 5-glutamyl glycerylphosphorylethanolamine modification is found at E289. N6,N6,N6-trimethyllysine is present on K306. Position 362 is a 5-glutamyl glycerylphosphorylethanolamine (E362). An N6,N6,N6-trimethyllysine modification is found at K396.

Belongs to the TRAFAC class translation factor GTPase superfamily. Classic translation factor GTPase family. EF-Tu/EF-1A subfamily.

The protein resides in the cytoplasm. Functionally, this protein promotes the GTP-dependent binding of aminoacyl-tRNA to the A-site of ribosomes during protein biosynthesis. This chain is Elongation factor 1-alpha (REFA1), found in Oryza sativa subsp. japonica (Rice).